An 87-amino-acid chain; its full sequence is Small ribosomal subunit protein uS17 (87 aa).

The protein belongs to the universal ribosomal protein uS17 family. In terms of assembly, part of the 30S ribosomal subunit.

Functionally, one of the primary rRNA binding proteins, it binds specifically to the 5'-end of 16S ribosomal RNA. The sequence is that of Small ribosomal subunit protein uS17 from Macrococcus caseolyticus (strain JCSC5402) (Macrococcoides caseolyticum).